The primary structure comprises 286 residues: MINIEKANTLIEALPYIEKHQGKTIVVKYGGSAMKKDGLKESVMEDLVLMSYVGINIVLVHGGGAEINKMLAKVDIESKFVNGLRYTDEETMEIVKMVLAGKVNKDLVNKIHTKGGKAVGLCGIDNNMILCDPYKNYELGFVGEIKKVNVELIESCLKSGYISVIATIGVGDDGETYNINGDTAASAIAKELNADKLILLTDVPGLLREPDEEKSLITEVILEDVDKLFEEGIITGGMIPKIEGCVDALNNGVNRVHILDGRVPHSIITELFTDSGIGTLIRKENE.

Substrate contacts are provided by residues 63 to 64 (GG), Arg-85, and Asn-178.

This sequence belongs to the acetylglutamate kinase family. ArgB subfamily.

It localises to the cytoplasm. The enzyme catalyses N-acetyl-L-glutamate + ATP = N-acetyl-L-glutamyl 5-phosphate + ADP. Its pathway is amino-acid biosynthesis; L-arginine biosynthesis; N(2)-acetyl-L-ornithine from L-glutamate: step 2/4. Functionally, catalyzes the ATP-dependent phosphorylation of N-acetyl-L-glutamate. This is Acetylglutamate kinase from Clostridioides difficile (strain 630) (Peptoclostridium difficile).